Consider the following 151-residue polypeptide: Aspartate carbamoyltransferase regulatory chain (151 aa).

4 residues coordinate Zn(2+): C107, C112, C135, and C138.

This sequence belongs to the PyrI family. In terms of assembly, contains catalytic and regulatory chains. Zn(2+) serves as cofactor.

Functionally, involved in allosteric regulation of aspartate carbamoyltransferase. The chain is Aspartate carbamoyltransferase regulatory chain from Psychromonas ingrahamii (strain DSM 17664 / CCUG 51855 / 37).